A 126-amino-acid polypeptide reads, in one-letter code: Aspartate 1-decarboxylase (126 aa).

Residue serine 25 is the Schiff-base intermediate with substrate; via pyruvic acid of the active site. At serine 25 the chain carries Pyruvic acid (Ser). Threonine 57 contacts substrate. Tyrosine 58 acts as the Proton donor in catalysis. 73–75 (GAA) serves as a coordination point for substrate.

The protein belongs to the PanD family. As to quaternary structure, heterooctamer of four alpha and four beta subunits. Pyruvate is required as a cofactor. Is synthesized initially as an inactive proenzyme, which is activated by self-cleavage at a specific serine bond to produce a beta-subunit with a hydroxyl group at its C-terminus and an alpha-subunit with a pyruvoyl group at its N-terminus.

The protein resides in the cytoplasm. It catalyses the reaction L-aspartate + H(+) = beta-alanine + CO2. The protein operates within cofactor biosynthesis; (R)-pantothenate biosynthesis; beta-alanine from L-aspartate: step 1/1. In terms of biological role, catalyzes the pyruvoyl-dependent decarboxylation of aspartate to produce beta-alanine. This Methylococcus capsulatus (strain ATCC 33009 / NCIMB 11132 / Bath) protein is Aspartate 1-decarboxylase.